We begin with the raw amino-acid sequence, 121 residues long: Small ribosomal subunit protein uS13 (121 aa).

The segment at 92–121 (RKGLPVRGQRTKTNARTRKGPRKSGVQLKK) is disordered.

It belongs to the universal ribosomal protein uS13 family. Part of the 30S ribosomal subunit. Forms a loose heterodimer with protein S19. Forms two bridges to the 50S subunit in the 70S ribosome.

In terms of biological role, located at the top of the head of the 30S subunit, it contacts several helices of the 16S rRNA. In the 70S ribosome it contacts the 23S rRNA (bridge B1a) and protein L5 of the 50S subunit (bridge B1b), connecting the 2 subunits; these bridges are implicated in subunit movement. Contacts the tRNAs in the A and P-sites. This chain is Small ribosomal subunit protein uS13, found in Polynucleobacter asymbioticus (strain DSM 18221 / CIP 109841 / QLW-P1DMWA-1) (Polynucleobacter necessarius subsp. asymbioticus).